We begin with the raw amino-acid sequence, 122 residues long: MRHYEIVLLIHPDQSEQVPAMLERYKGLVTAAGGKVHRVEDWGRRQLAYLINKLAKAHYLCLNIECSKETLLELETGFKFNDAVLRHLTVVKSKAETAPSIMMKAVEREESRKAPQPQEAAA.

It belongs to the bacterial ribosomal protein bS6 family.

Binds together with bS18 to 16S ribosomal RNA. The polypeptide is Small ribosomal subunit protein bS6 (Methylibium petroleiphilum (strain ATCC BAA-1232 / LMG 22953 / PM1)).